Reading from the N-terminus, the 336-residue chain is Major histocompatibility complex class I-related protein 1 (336 aa).

Residues 1 to 18 (MMLLLPLIIVLMMKLSDA) form the signal peptide. The segment at 19 to 105 (RTHSLRYFRL…KQLQHHYNHS (87 aa)) is alpha-1. Residues 19 to 197 (RTHSLRYFRL…EYGKDALQRT (179 aa)) form an antigen-binding cleft region. The Extracellular segment spans residues 19 to 298 (RTHSLRYFRL…QESETILLVV (280 aa)). Tyr25 and Arg27 together coordinate 8-(9H-purin-6-yl)-2-oxa-8-azabicyclo[3.3.1]nona-3,6-diene-4,6-dicarbaldehyde. 5-(2-oxoethylideneamino)-6-(D-ribitylamino)uracil-binding residues include Arg27, Ser42, and Lys61. 5-(2-oxopropylideneamino)-6-(D-ribitylamino)uracil is bound by residues Arg27, Ser42, and Lys61. 7-hydroxy-6-methyl-8-(1-D-ribityl)lumazine-binding residues include Arg27, Ser42, and Lys61. Residues Lys61 and His76 each coordinate 8-(9H-purin-6-yl)-2-oxa-8-azabicyclo[3.3.1]nona-3,6-diene-4,6-dicarbaldehyde. Lys61 contributes to the 2-amino-4-oxopteridine-6-carbaldehyde binding site. Lys61 is a binding site for pyridoxal. N-linked (GlcNAc...) asparagine glycosylation is present at Asn103. Positions 106 to 197 (GFHTYQRMIG…EYGKDALQRT (92 aa)) are alpha-2. An 8-(9H-purin-6-yl)-2-oxa-8-azabicyclo[3.3.1]nona-3,6-diene-4,6-dicarbaldehyde-binding site is contributed by Arg112. 5-(2-oxoethylideneamino)-6-(D-ribitylamino)uracil contacts are provided by Arg112, Tyr170, and Gln171. Residues Arg112, Tyr170, and Gln171 each contribute to the 5-(2-oxopropylideneamino)-6-(D-ribitylamino)uracil site. Arg112, Tyr170, and Gln171 together coordinate 7-hydroxy-6-methyl-8-(1-D-ribityl)lumazine. Disulfide bonds link Cys116-Cys179 and Cys218-Cys274. An alpha-3 region spans residues 198-289 (EPPKVRVNHK…GVHMVLQGFQ (92 aa)). The Ig-like C1-type domain maps to 200-295 (PKVRVNHKET…QGFQESETIL (96 aa)). Residues 290-298 (ESETILLVV) are connecting peptide. The chain crosses the membrane as a helical span at residues 299 to 319 (KAVGFIVLAIALAGVGILAWR). The Cytoplasmic portion of the chain corresponds to 320–336 (KRPRGKNKVICLSTPEH).

The protein belongs to the MHC class I family. In terms of assembly, heterotrimer that consists of MR1, B2M and metabolite antigen. Major classes of metabolite ligands presented by MR1 include riboflavin-related antigens, pyrimidines and ribityl lumazines, nucleobase adducts and folate derivatives. Forms reversible covalent Schiff base complexes with microbial pyrimidine-based metabolite, which serves as a molecular switch triggering complete folding, stable association with B2M and translocation of the ternary complex from endoplasmic reticulum to the plasma membrane. Alternatively, forms non-Schiff base complexes with ribityl lumazines. On antigen-presenting cells, the ternary complex interacts with TCR on MR1-restricted T cells. Interacts with TAPBP and TAPBPL chaperones in the endoplasmic reticulum. TAPBP associated or not with MHC class I peptide loading complex binds ligand-free MR1 or MR1-B2M complex, providing for stable MR1 pools ready for metabolite antigen processing. TAPBPL interacts with MR1 in a ligand-independent way; this interaction may stabilize MR1 pool and facilitate ligand loading and dissociation. Structurally, MR1-B2M heterodimer adopts a topology similar to classical MHC class I molecules, with alpha-1 and alpha-2 domains of MR1 forming the antigen-binding cleft composed of two alpha-helices resting on a floor of 7-stranded anti-parallel beta-pleated sheet. MR1-B2M heterodimer (via alpha-helices) interacts with TCR (via CDR domains). Post-translationally, N-glycosylated.

The protein resides in the cell membrane. Its subcellular location is the endoplasmic reticulum membrane. It localises to the golgi apparatus membrane. The protein localises to the early endosome membrane. It is found in the late endosome membrane. Functionally, antigen-presenting molecule specialized in displaying microbial pyrimidine-based metabolites to alpha-beta T cell receptors (TCR) on innate-type mucosal-associated invariant T (MAIT) cells. In complex with B2M preferentially presents riboflavin-derived metabolites to semi-invariant TCRs on MAIT cells, guiding immune surveillance of the microbial metabolome at mucosal epithelial barriers. Signature pyrimidine-based microbial antigens are generated via non-enzymatic condensation of metabolite intermediates of the riboflavin pathway with by-products arising from other metabolic pathways such as glycolysis. Typical potent antigenic metabolites are 5-(2-oxoethylideneamino)-6-D-ribitylaminouracil (5-OE-RU) and 5-(2-oxopropylideneamino)-6-D-ribitylaminouracil (5-OP-RU), products of condensation of 5-amino-6-D-ribityaminouracil (5-A-RU) with glyoxal or methylglyoxal by-products, respectively. May present microbial antigens to various MAIT cell subsets, providing for unique recognition of diverse microbes, including pathogens that do not synthesize riboflavin. Upon antigen recognition, elicits rapid innate-type MAIT cell activation to eliminate pathogenic microbes by directly killing infected cells. During T cell development, drives thymic selection and post-thymic terminal differentiation of MAIT cells in a process dependent on commensal microflora. Acts as an immune sensor of cancer cell metabolome. May present a tumor-specific or -associated metabolite essential for cancer cell survival to a pan-cancer TCR on a non-MAIT CD8-positive T cell clone, triggering T cell-mediated killing of a wide range of cancer cell types. May present tumor-enriched pyridoxal and pyridoxal 5'-phosphate antigens, enabling preferential recognition of cancer cells. Presents nucleobase carbonyl adducts generated during oxidative stress. Captures M3Ade, a nucleobase adduct composed of one adenine modified by a malondialdehyde trimer, for recognition by MR1-restricted T cell clones expressing a polyclonal TCR repertoire. The chain is Major histocompatibility complex class I-related protein 1 from Bos taurus (Bovine).